Consider the following 330-residue polypeptide: AA9 family lytic polysaccharide monooxygenase E (330 aa).

Positions Met-1–Ala-20 are cleaved as a signal peptide. Positions 21 and 99 each coordinate Cu(2+). Cysteines 58 and 193 form a disulfide. Residues His-179 and Gln-188 each contribute to the O2 site. Tyr-190 provides a ligand contact to Cu(2+). One can recognise a CBM1 domain in the interval Cys-293–Val-330.

The protein belongs to the polysaccharide monooxygenase AA9 family. Requires Cu(2+) as cofactor.

The protein resides in the secreted. The enzyme catalyses [(1-&gt;4)-beta-D-glucosyl]n+m + reduced acceptor + O2 = 4-dehydro-beta-D-glucosyl-[(1-&gt;4)-beta-D-glucosyl]n-1 + [(1-&gt;4)-beta-D-glucosyl]m + acceptor + H2O.. Lytic polysaccharide monooxygenase (LPMO) that depolymerizes crystalline and amorphous polysaccharides via the oxidation of scissile alpha- or beta-(1-4)-glycosidic bonds, yielding exclusively C1 oxidation products. Catalysis by LPMOs requires the reduction of the active-site copper from Cu(II) to Cu(I) by a reducing agent and H(2)O(2) or O(2) as a cosubstrate. The protein is AA9 family lytic polysaccharide monooxygenase E (gh61-5) of Neurospora crassa (strain ATCC 24698 / 74-OR23-1A / CBS 708.71 / DSM 1257 / FGSC 987).